The sequence spans 354 residues: C-C chemokine receptor type 5 (354 aa).

At 1–32 (MDFQGSVPTYSYDIDYGMSAPCQKINVKQIAA) the chain is on the extracellular side. O-linked (GalNAc...) serine glycosylation occurs at S6. 3 positions are modified to sulfotyrosine: Y10, Y12, and Y16. Disulfide bonds link C22–C271 and C103–C180. A helical transmembrane segment spans residues 33 to 60 (QLLPPLYSLVFIFGFVGNMMVFLILISC). The Cytoplasmic portion of the chain corresponds to 61 to 70 (KKLKSVTDIY). Residues 71-91 (LLNLAISDLLFLLTLPFWAHY) traverse the membrane as a helical segment. The Extracellular portion of the chain corresponds to 92-104 (AANEWVFGNIMCK). A helical transmembrane segment spans residues 105–126 (VFTGLYHIGYFGGIFFIILLTI). The Cytoplasmic portion of the chain corresponds to 127 to 143 (DRYLAIVHAVFALKVRT). Residues 144–168 (VNFGVITSVVTWAVAVFASLPEIIF) form a helical membrane-spanning segment. At 169–200 (TRSQKEGFHYTCSPHFPHTQYHFWKSFQTLKM) the chain is on the extracellular side. A helical transmembrane segment spans residues 201 to 220 (VILSLILPLLVMVICYSGIL). The Cytoplasmic portion of the chain corresponds to 221 to 237 (HTLFRCRNEKKRHRAVR). Residues 238–262 (LIFAIMIVYFLFWTPYNIVLLLTTF) traverse the membrane as a helical segment. Residues 263 to 279 (QEFFGLNNCSSSNRLDQ) lie on the Extracellular side of the membrane. The helical transmembrane segment at 280-303 (AMQATETLGMTHCCLNPVIYAFVG) threads the bilayer. Over 304 to 354 (EKFRSYLSVFFRKHMVKRFCKRCSIFQQDNPDRASSVYTRSTGEHEVSTGL) the chain is Cytoplasmic. 2 S-palmitoyl cysteine lipidation sites follow: C323 and C326. A phosphoserine; by BARK1 mark is found at S338, S339, S344, and S351.

This sequence belongs to the G-protein coupled receptor 1 family. Interacts with PRAF2. Efficient ligand binding to CCL3/MIP-1alpha and CCL4/MIP-1beta requires sulfation, O-glycosylation and sialic acid modifications. Glycosylation on Ser-6 is required for efficient binding of CCL4. Interacts with GRK2. Interacts with ARRB1 and ARRB2. Interacts with CNIH4. Interacts with S100A4; this interaction stimulates T-lymphocyte chemotaxis. Post-translationally, sulfated on at least 2 of the N-terminal tyrosines. Sulfation is required for efficient binding of the chemokines, CCL3 and CCL4. In terms of processing, O-glycosylated, but not N-glycosylated. Ser-6 appears to be the major site. Also sialylated glycans present which contribute to chemokine binding. Palmitoylation in the C-terminal is important for cell surface expression. Post-translationally, phosphorylation on serine residues in the C-terminal is stimulated by binding CC chemokines especially by APO-RANTES.

The protein localises to the cell membrane. Receptor for a number of inflammatory CC-chemokines including CCL3/MIP-1-alpha, CCL4/MIP-1-beta and RANTES and subsequently transduces a signal by increasing the intracellular calcium ion level. May play a role in the control of granulocytic lineage proliferation or differentiation. Participates in T-lymphocyte migration to the infection site by acting as a chemotactic receptor. The chain is C-C chemokine receptor type 5 (Ccr5) from Mus musculus (Mouse).